The chain runs to 203 residues: Glycerol-3-phosphate acyltransferase (203 aa).

The Periplasmic portion of the chain corresponds to 1–3 (MSA). The chain crosses the membrane as a helical span at residues 4 to 24 (IAPGMILFAYLCGSISSAILV). The Cytoplasmic portion of the chain corresponds to 25-52 (CRIAGLPDPRESGSGNPGATNVLRIGGK). The helical transmembrane segment at 53–73 (GAAVAVLIFDILKGMLPVWGA) threads the bilayer. The Periplasmic segment spans residues 74–80 (YALGVTP). Residues 81 to 101 (FWLGLIAIAACLGHIWPVFFG) traverse the membrane as a helical segment. Topologically, residues 102-111 (FKGGKGVATA) are cytoplasmic. A helical membrane pass occupies residues 112 to 132 (FGAIAPIGWDLTGVMAGTWLL). At 133-137 (TVLLS) the chain is on the periplasmic side. A helical transmembrane segment spans residues 138–158 (GYSSLGAIVSALIAPFYVWWF). Over 159 to 203 (KPQFTFPVSMLSCLILLRHHDNIQRLWRRQETKIWTKLKKKRQKD) the chain is Cytoplasmic.

Belongs to the PlsY family. As to quaternary structure, probably interacts with PlsX.

It localises to the cell inner membrane. The catalysed reaction is sn-glycerol 3-phosphate + an acyl-CoA = a 1-acyl-sn-glycero-3-phosphate + CoA. It catalyses the reaction a fatty acyl-[ACP] + sn-glycerol 3-phosphate = a 1-acyl-sn-glycero-3-phosphate + holo-[ACP]. It participates in lipid metabolism; phospholipid metabolism. Catalyzes the transfer of an acyl group from acyl-ACP to glycerol-3-phosphate (G3P) to form lysophosphatidic acid (LPA). This enzyme can also utilize acyl-CoA as fatty acyl donor, but not acyl-PO(4). In Salmonella agona (strain SL483), this protein is Glycerol-3-phosphate acyltransferase.